The chain runs to 230 residues: U2 small nuclear ribonucleoprotein A' (230 aa).

LRR repeat units lie at residues 15 to 36 (SLRN…NADT), 48 to 69 (GDRE…GVTE), 71 to 92 (HYTS…PRLE), 93 to 114 (TLRT…KNIA), and 115 to 136 (KLET…ESLK). The LRRCT domain maps to 149 to 187 (NPVQHVPRYRSYMISILPSLRMLDFQRVTQKERDEAEAM).

The protein belongs to the U2 small nuclear ribonucleoprotein A family. In terms of assembly, associated with the spliceosome.

The protein localises to the nucleus. Involved in pre-mRNA splicing. This Yarrowia lipolytica (strain CLIB 122 / E 150) (Yeast) protein is U2 small nuclear ribonucleoprotein A' (LEA1).